The sequence spans 656 residues: UvrABC system protein B (656 aa).

The Helicase ATP-binding domain occupies 23–180 (EGIKKGYRFQ…QHLAKIGYER (158 aa)). 36-43 (GVTGSGKT) contacts ATP. The Beta-hairpin signature appears at 89–112 (YYDYYQPEAYVPTKDLYIEKNADI). Residues 426-588 (QVDDLISEIK…ITPKTIVKPL (163 aa)) form the Helicase C-terminal domain. One can recognise a UVR domain in the interval 614-649 (EEYLSLLEEEMYRAASELRYEDAAKLRDEIFRLREE).

This sequence belongs to the UvrB family. As to quaternary structure, forms a heterotetramer with UvrA during the search for lesions. Interacts with UvrC in an incision complex.

It localises to the cytoplasm. Functionally, the UvrABC repair system catalyzes the recognition and processing of DNA lesions. A damage recognition complex composed of 2 UvrA and 2 UvrB subunits scans DNA for abnormalities. Upon binding of the UvrA(2)B(2) complex to a putative damaged site, the DNA wraps around one UvrB monomer. DNA wrap is dependent on ATP binding by UvrB and probably causes local melting of the DNA helix, facilitating insertion of UvrB beta-hairpin between the DNA strands. Then UvrB probes one DNA strand for the presence of a lesion. If a lesion is found the UvrA subunits dissociate and the UvrB-DNA preincision complex is formed. This complex is subsequently bound by UvrC and the second UvrB is released. If no lesion is found, the DNA wraps around the other UvrB subunit that will check the other stand for damage. This chain is UvrABC system protein B, found in Pseudothermotoga lettingae (strain ATCC BAA-301 / DSM 14385 / NBRC 107922 / TMO) (Thermotoga lettingae).